The following is a 479-amino-acid chain: MTNTEKYKQLRSMIPEMRRIKHIHFVGIGGAGMGGIAEVLVNEGYHISGSDIATNSVTDRLISLGAKVIIGHHADSVEHADVVVVSTAINHENPEIIAAKERRIPIVRRAEMLAELMRYRHGVAIAGTHGKTTTTSLIASVYAQAQRDPTFVIGGLLNSAGTNARLGTSRYLIAEADESDASFLHLQPMVSVITNIEADHMDTYGGDFEKLKTTFVDFLHNLPFYGVAVMCIDDEINREIMPRVGRQIVTYGFSQDADVQALNFNQIGHQSQFVVRRKDKEDLALVLNLPGEHNVLNALAAIAVASEDDIDDESIVKALAEFEGIGRRFQHLGEFNTANGQVMLVDDYGHHPSEVLATIKAARAGWPDKRLVMAYQPHRYSRTRDLYDDFVEVLSQVDCLLLLDVYSAGEAAIPGADGRALCRSIRLRGQIDPIFVASPDQLASVLPDVLQAGDLLLTQGAGNIGALSKLLASTNLGFE.

127-133 contributes to the ATP binding site; sequence GTHGKTT.

The protein belongs to the MurCDEF family.

The protein resides in the cytoplasm. The catalysed reaction is UDP-N-acetyl-alpha-D-muramate + L-alanine + ATP = UDP-N-acetyl-alpha-D-muramoyl-L-alanine + ADP + phosphate + H(+). Its pathway is cell wall biogenesis; peptidoglycan biosynthesis. Functionally, cell wall formation. The protein is UDP-N-acetylmuramate--L-alanine ligase of Shewanella denitrificans (strain OS217 / ATCC BAA-1090 / DSM 15013).